The following is a 714-amino-acid chain: Fatty acid oxidation complex subunit alpha (714 aa).

The tract at residues 1–190 (MEMASAFTLN…KLGLVDDVVP (190 aa)) is enoyl-CoA hydratase. Residues 306–714 (APLNSVGILG…FWKTTATDLQ (409 aa)) are 3-hydroxyacyl-CoA dehydrogenase.

In the N-terminal section; belongs to the enoyl-CoA hydratase/isomerase family. It in the central section; belongs to the 3-hydroxyacyl-CoA dehydrogenase family. In terms of assembly, heterotetramer of two alpha chains (FadJ) and two beta chains (FadI).

Its subcellular location is the cytoplasm. The enzyme catalyses a (3S)-3-hydroxyacyl-CoA = a (2E)-enoyl-CoA + H2O. It catalyses the reaction a 4-saturated-(3S)-3-hydroxyacyl-CoA = a (3E)-enoyl-CoA + H2O. The catalysed reaction is a (3S)-3-hydroxyacyl-CoA + NAD(+) = a 3-oxoacyl-CoA + NADH + H(+). It carries out the reaction (3S)-3-hydroxybutanoyl-CoA = (3R)-3-hydroxybutanoyl-CoA. Its pathway is lipid metabolism; fatty acid beta-oxidation. Its function is as follows. Catalyzes the formation of a hydroxyacyl-CoA by addition of water on enoyl-CoA. Also exhibits 3-hydroxyacyl-CoA epimerase and 3-hydroxyacyl-CoA dehydrogenase activities. This is Fatty acid oxidation complex subunit alpha from Escherichia coli O81 (strain ED1a).